The primary structure comprises 117 residues: Fluoride-specific ion channel FluC 1 (117 aa).

4 helical membrane-spanning segments follow: residues 1–21, 35–55, 60–80, and 97–117; these read MIHI…RAWL, IATL…YGIA, LFSL…STLS, and FSYS…GYSI. Residues G71 and T74 each coordinate Na(+).

Belongs to the fluoride channel Fluc/FEX (TC 1.A.43) family.

The protein localises to the cell membrane. The enzyme catalyses fluoride(in) = fluoride(out). Na(+) is not transported, but it plays an essential structural role and its presence is essential for fluoride channel function. Functionally, fluoride-specific ion channel. Important for reducing fluoride concentration in the cell, thus reducing its toxicity. This chain is Fluoride-specific ion channel FluC 1, found in Staphylococcus haemolyticus (strain JCSC1435).